A 133-amino-acid chain; its full sequence is MWKDFKEFAMKGNVVDLAVGVIIGGAFGKIVTSLVNDVIMPILGLILGGINFTSAKLTLHGLNSEKPLTLNYGQFIQNILDFLIISFSIFLFIRLINRFKRKEEAVEEAKIPEISREEELLGEIRDLLKEKNK.

3 consecutive transmembrane segments (helical) span residues 8 to 28 (FAMK…GAFG), 30 to 50 (IVTS…LGGI), and 73 to 93 (GQFI…FLFI).

It belongs to the MscL family. As to quaternary structure, homopentamer.

The protein localises to the cell membrane. Functionally, channel that opens in response to stretch forces in the membrane lipid bilayer. May participate in the regulation of osmotic pressure changes within the cell. The protein is Large-conductance mechanosensitive channel of Hathewaya histolytica (Clostridium histolyticum).